The primary structure comprises 349 residues: UDP-N-acetylenolpyruvoylglucosamine reductase (349 aa).

The region spanning 25–213 (VGPVARRLVT…VEQGERTDPQ (189 aa)) is the FAD-binding PCMH-type domain. The active site involves R165. Residue S242 is the Proton donor of the active site. E341 is an active-site residue.

Belongs to the MurB family. It depends on FAD as a cofactor.

Its subcellular location is the cytoplasm. The enzyme catalyses UDP-N-acetyl-alpha-D-muramate + NADP(+) = UDP-N-acetyl-3-O-(1-carboxyvinyl)-alpha-D-glucosamine + NADPH + H(+). It functions in the pathway cell wall biogenesis; peptidoglycan biosynthesis. Functionally, cell wall formation. The protein is UDP-N-acetylenolpyruvoylglucosamine reductase of Mycolicibacterium gilvum (strain PYR-GCK) (Mycobacterium gilvum (strain PYR-GCK)).